We begin with the raw amino-acid sequence, 796 residues long: MKFSFSWLKSVLDTKADAKLIAEKLTSLGLEIESVEDASAALKSFRVARVLTAEKHPQADKLQVLSVDLGDGNPLQVVCGAPNARAGLVGVLGLPGAVVPANGMELRKSAIRGVESNGMMCSTRELGLGEEHDGIIELPGDAPLGTTFADYLGSDPVFDVAITPNRPDCMGVYGIARDLAAAGLGVLKPIAAQSVAGSFPCPVEVRTDDPEGCPAFYGRVIRGVRNGPSPKWLQDYLKSAGQRPISALVDITNYVMLGYGRPAHAYDVAKLSGAVVARKAREGETCLALNGKEYGLQPWMTVIADDAGVHDIAGIMGGEHSGCSDETTDVLLEVAYFTPANIARTGQALALTSDARGRFERGVDPAFLDTGLDLLTSLILEICGGEASEVVRAGEPPLARKALAYDPDLAGNLGGIDVAAAEQKRILGALGFDVADDWTVAVPTWRPDVAGPPDIVEEVIRVHGLDAVPSTPLPRADGVAKPTATPAQMLERRVRRAAASRGLHEAVTWSFLPEAEAARFADGEALWSLANPISEDLKVMRPSLLPGLLSAAQRNLHRGATSIRLFEIGRRYLRGAGGASDEKLSLAVVLAGDRIARGWASGKAQPFDAFDAKAEALALLAEAGAPVDNLQVMGEAGPQFHPGQSATLRLGPKQVLARFGMLHPATARAFDLDGPVAVVELFLDRIPAKKGAGQFARPHYAPPALQAVTRDFAFLVDASVPAGDLLRAVKGADKQAIVAARVFDDFRGQGVAEGQKSLAIEVTLQPVDKSFDEAALKAIADKVVAAAGKLGAELRR.

Residues 39 to 149 (SAALKSFRVA…GDAPLGTTFA (111 aa)) enclose the tRNA-binding domain. A B5 domain is found at 398–470 (LARKALAYDP…RVHGLDAVPS (73 aa)). Mg(2+) is bound by residues aspartate 448, aspartate 454, glutamate 457, and glutamate 458. The FDX-ACB domain occupies 703–795 (PALQAVTRDF…AAGKLGAELR (93 aa)).

Belongs to the phenylalanyl-tRNA synthetase beta subunit family. Type 1 subfamily. Tetramer of two alpha and two beta subunits. The cofactor is Mg(2+).

It is found in the cytoplasm. It catalyses the reaction tRNA(Phe) + L-phenylalanine + ATP = L-phenylalanyl-tRNA(Phe) + AMP + diphosphate + H(+). This is Phenylalanine--tRNA ligase beta subunit from Novosphingobium aromaticivorans (strain ATCC 700278 / DSM 12444 / CCUG 56034 / CIP 105152 / NBRC 16084 / F199).